Consider the following 265-residue polypeptide: MTSKDEAKSSSVEERRRHALDLLPPPANSNKPLTPFSIEDILNKPSVRRSYTICGTAHLLSTAEKPPAAGLPLSSRALLSQTSPLCALEELASKTFKGLEVSVLQAAEGRDGMTIFGQRQTPKKRRKSRTAFTNHQIYELEKRFLYQKYLSPADRDQIAQQLGLTNAQVITWFQNRRAKLKRDLEEMKADVESVKKMSPSTVEAVLTISELEEETNSVRDDSRSRSPQLGLSGHMPLSPSSPLTEQHTSKECSEDEEDVEIDVDD.

The span at 1-20 (MTSKDEAKSSSVEERRRHAL) shows a compositional bias: basic and acidic residues. The tract at residues 1–33 (MTSKDEAKSSSVEERRRHALDLLPPPANSNKPL) is disordered. A DNA-binding region (homeobox) is located at residues 125-184 (RRKSRTAFTNHQIYELEKRFLYQKYLSPADRDQIAQQLGLTNAQVITWFQNRRAKLKRDL). A disordered region spans residues 212-265 (EEETNSVRDDSRSRSPQLGLSGHMPLSPSSPLTEQHTSKECSEDEEDVEIDVDD). The span at 253-265 (SEDEEDVEIDVDD) shows a compositional bias: acidic residues.

It localises to the nucleus. In terms of biological role, transcription factor that controls hypaxial muscle development by down-regulating myod1 and cdkn1b/p27, thereby allowing myoblasts to proliferate before the onset of terminal differentiation. This Xenopus tropicalis (Western clawed frog) protein is Transcription factor LBX1.